A 341-amino-acid chain; its full sequence is KRR1 small subunit processome component homolog (341 aa).

The KH domain maps to 126–194 (DIIKIGNLVH…VRDIVLETMN (69 aa)). The span at 230-244 (KNKNISKRKQPKSRK) shows a compositional bias: basic residues. A disordered region spans residues 230–327 (KNKNISKRKQ…RPSEASKVDV (98 aa)). Positions 271-341 (FLNKEQKQAK…AKLLKANKQK (71 aa)) form a coiled coil. 2 stretches are compositionally biased toward basic and acidic residues: residues 272–303 (LNKE…RNKD) and 313–327 (EQNR…KVDV).

It belongs to the KRR1 family. In terms of assembly, monomer. Component of the ribosomal small subunit (SSU) processome.

Its subcellular location is the nucleus. It is found in the nucleolus. Its function is as follows. Required for 40S ribosome biogenesis. Involved in nucleolar processing of pre-18S ribosomal RNA and ribosome assembly. Binds to RNA. Required for female germline development, cell viability during eye development and for survival of dividing cells and epithelial cells during early wing disk development. The sequence is that of KRR1 small subunit processome component homolog from Drosophila grimshawi (Hawaiian fruit fly).